The primary structure comprises 179 residues: Ribosome maturation factor RimP (179 aa).

The protein belongs to the RimP family.

The protein resides in the cytoplasm. In terms of biological role, required for maturation of 30S ribosomal subunits. In Chlorobium chlorochromatii (strain CaD3), this protein is Ribosome maturation factor RimP.